The primary structure comprises 150 residues: Large ribosomal subunit protein uL15 (150 aa).

Residues 18–43 (IVGRGSSSGWGKTSGKGHKGQQARSG) form a disordered region.

It belongs to the universal ribosomal protein uL15 family. As to quaternary structure, part of the 50S ribosomal subunit.

Binds to the 23S rRNA. The sequence is that of Large ribosomal subunit protein uL15 from Treponema denticola (strain ATCC 35405 / DSM 14222 / CIP 103919 / JCM 8153 / KCTC 15104).